The chain runs to 365 residues: Sulfate/thiosulfate import ATP-binding protein CysA (365 aa).

The ABC transporter domain maps to 3-237 (IEIANIKKSF…PATRFVLEFM (235 aa)). 35-42 (GPSGSGKT) provides a ligand contact to ATP.

It belongs to the ABC transporter superfamily. Sulfate/tungstate importer (TC 3.A.1.6) family. The complex is composed of two ATP-binding proteins (CysA), two transmembrane proteins (CysT and CysW) and a solute-binding protein (CysP).

It is found in the cell inner membrane. The enzyme catalyses sulfate(out) + ATP + H2O = sulfate(in) + ADP + phosphate + H(+). The catalysed reaction is thiosulfate(out) + ATP + H2O = thiosulfate(in) + ADP + phosphate + H(+). Its function is as follows. Part of the ABC transporter complex CysAWTP involved in sulfate/thiosulfate import. Responsible for energy coupling to the transport system. This is Sulfate/thiosulfate import ATP-binding protein CysA from Escherichia coli O6:H1 (strain CFT073 / ATCC 700928 / UPEC).